The chain runs to 156 residues: Small ribosomal subunit protein uS7 (156 aa).

It belongs to the universal ribosomal protein uS7 family. As to quaternary structure, part of the 30S ribosomal subunit. Contacts proteins S9 and S11.

In terms of biological role, one of the primary rRNA binding proteins, it binds directly to 16S rRNA where it nucleates assembly of the head domain of the 30S subunit. Is located at the subunit interface close to the decoding center, probably blocks exit of the E-site tRNA. This chain is Small ribosomal subunit protein uS7, found in Synechococcus sp. (strain JA-2-3B'a(2-13)) (Cyanobacteria bacterium Yellowstone B-Prime).